Reading from the N-terminus, the 220-residue chain is Thiopurine S-methyltransferase (220 aa).

4 residues coordinate S-adenosyl-L-methionine: tryptophan 10, leucine 45, glutamate 66, and arginine 123.

Belongs to the class I-like SAM-binding methyltransferase superfamily. TPMT family.

It is found in the cytoplasm. The catalysed reaction is S-adenosyl-L-methionine + a thiopurine = S-adenosyl-L-homocysteine + a thiopurine S-methylether.. This chain is Thiopurine S-methyltransferase, found in Nitrosomonas eutropha (strain DSM 101675 / C91 / Nm57).